The following is a 217-amino-acid chain: Large ribosomal subunit protein uL3 (217 aa).

The protein belongs to the universal ribosomal protein uL3 family. As to quaternary structure, part of the 50S ribosomal subunit. Forms a cluster with proteins L14 and L19.

One of the primary rRNA binding proteins, it binds directly near the 3'-end of the 23S rRNA, where it nucleates assembly of the 50S subunit. The protein is Large ribosomal subunit protein uL3 of Mycobacterium leprae (strain TN).